The chain runs to 363 residues: Ribosome-binding ATPase YchF (363 aa).

The OBG-type G domain occupies 3–256; the sequence is FKCGIVGLPN…LDDDEKIEFL (254 aa). An ATP-binding site is contributed by 12–17; that stretch reads NVGKST. Mg(2+)-binding residues include S16 and T36. Positions 278-361 constitute a TGS domain; that stretch reads NLQTYFTAGV…QDGDVMHFRF (84 aa).

Belongs to the TRAFAC class OBG-HflX-like GTPase superfamily. OBG GTPase family. YchF/OLA1 subfamily. Mg(2+) is required as a cofactor.

Functionally, ATPase that binds to both the 70S ribosome and the 50S ribosomal subunit in a nucleotide-independent manner. The sequence is that of Ribosome-binding ATPase YchF from Pasteurella multocida (strain Pm70).